Consider the following 260-residue polypeptide: tRNA pseudouridine synthase A (260 aa).

Catalysis depends on D52, which acts as the Nucleophile. Y110 is a binding site for substrate.

Belongs to the tRNA pseudouridine synthase TruA family. Homodimer.

It carries out the reaction uridine(38/39/40) in tRNA = pseudouridine(38/39/40) in tRNA. Formation of pseudouridine at positions 38, 39 and 40 in the anticodon stem and loop of transfer RNAs. The sequence is that of tRNA pseudouridine synthase A from Spiroplasma kunkelii.